Consider the following 365-residue polypeptide: Protein YIM1 (365 aa).

It belongs to the YIM1 family.

It is found in the lipid droplet. It localises to the mitochondrion. The polypeptide is Protein YIM1 (YIM1) (Saccharomyces cerevisiae (strain ATCC 204508 / S288c) (Baker's yeast)).